A 375-amino-acid polypeptide reads, in one-letter code: Chaperone protein DnaJ (375 aa).

In terms of domain architecture, J spans 5-69; that stretch reads DYYEVLGVSK…QKRAQYDQFG (65 aa). A CR-type zinc finger spans residues 132 to 214; the sequence is GKETIIEIPR…CGGTGKVKKR (83 aa). 8 residues coordinate Zn(2+): Cys145, Cys148, Cys162, Cys165, Cys188, Cys191, Cys202, and Cys205. CXXCXGXG motif repeat units follow at residues 145 to 152, 162 to 169, 188 to 195, and 202 to 209; these read CETCKGSG, CSHCGGSG, CHHCEGTG, and CSDCGGTG.

It belongs to the DnaJ family. Homodimer. The cofactor is Zn(2+).

Its subcellular location is the cytoplasm. In terms of biological role, participates actively in the response to hyperosmotic and heat shock by preventing the aggregation of stress-denatured proteins and by disaggregating proteins, also in an autonomous, DnaK-independent fashion. Unfolded proteins bind initially to DnaJ; upon interaction with the DnaJ-bound protein, DnaK hydrolyzes its bound ATP, resulting in the formation of a stable complex. GrpE releases ADP from DnaK; ATP binding to DnaK triggers the release of the substrate protein, thus completing the reaction cycle. Several rounds of ATP-dependent interactions between DnaJ, DnaK and GrpE are required for fully efficient folding. Also involved, together with DnaK and GrpE, in the DNA replication of plasmids through activation of initiation proteins. In Bacillus velezensis (strain DSM 23117 / BGSC 10A6 / LMG 26770 / FZB42) (Bacillus amyloliquefaciens subsp. plantarum), this protein is Chaperone protein DnaJ.